The following is a 1101-amino-acid chain: Zinc finger SWIM domain-containing protein 4 (1101 aa).

The disordered stretch occupies residues 1 to 29 (MEPPAAKRSRGCPAGDEPGTGARRSRPEP). The segment at 134–171 (YHVSISFDRCKITSVSCGCDNRDLFYCAHVVALSLYRI) adopts an SWIM-type zinc-finger fold.

In Mus musculus (Mouse), this protein is Zinc finger SWIM domain-containing protein 4 (Zswim4).